A 104-amino-acid chain; its full sequence is Large ribosomal subunit protein uL24 (104 aa).

The protein belongs to the universal ribosomal protein uL24 family. As to quaternary structure, part of the 50S ribosomal subunit.

Its function is as follows. One of two assembly initiator proteins, it binds directly to the 5'-end of the 23S rRNA, where it nucleates assembly of the 50S subunit. One of the proteins that surrounds the polypeptide exit tunnel on the outside of the subunit. The chain is Large ribosomal subunit protein uL24 from Cronobacter sakazakii (strain ATCC BAA-894) (Enterobacter sakazakii).